A 403-amino-acid polypeptide reads, in one-letter code: ESX-5 secretion system protein EccE5 (403 aa).

Transmembrane regions (helical) follow at residues 9-29 (LALSWARLTTVFVIDLLILIV) and 43-63 (IAWWVGVGIAVLVTLLSVVTY).

Belongs to the EccE family. As to quaternary structure, part of the ESX-5 / type VII secretion system (T7SS), which is composed of cytosolic and membrane components. The ESX-5 membrane complex is composed of EccB5, EccC5, EccD5 and EccE5.

It is found in the cell inner membrane. Its function is as follows. Part of the ESX-5 specialized secretion system, which is responsible for the secretion of EsxN and a number of PE_PGRS and PPE proteins. The chain is ESX-5 secretion system protein EccE5 from Mycobacterium marinum (strain ATCC BAA-535 / M).